Reading from the N-terminus, the 253-residue chain is Trypsin delta (253 aa).

The first 22 residues, 1–22 (MLKFVILLSAVACALGGTVPEG), serve as a signal peptide directing secretion. The propeptide at 23–30 (LLPQLDGR) is activation peptide. A Peptidase S1 domain is found at 31 to 253 (IVGGSATTIS…ALRSWVISNA (223 aa)). Residues C56 and C72 are joined by a disulfide bond. Catalysis depends on charge relay system residues H71 and D116. Cystine bridges form between C180-C197 and C206-C230. The Charge relay system role is filled by S210.

Belongs to the peptidase S1 family.

The protein resides in the secreted. The protein localises to the extracellular space. It carries out the reaction Preferential cleavage: Arg-|-Xaa, Lys-|-Xaa.. The protein is Trypsin delta of Drosophila melanogaster (Fruit fly).